Consider the following 89-residue polypeptide: Small ribosomal subunit protein uS15 (89 aa).

The protein belongs to the universal ribosomal protein uS15 family. As to quaternary structure, part of the 30S ribosomal subunit. Forms a bridge to the 50S subunit in the 70S ribosome, contacting the 23S rRNA.

One of the primary rRNA binding proteins, it binds directly to 16S rRNA where it helps nucleate assembly of the platform of the 30S subunit by binding and bridging several RNA helices of the 16S rRNA. Its function is as follows. Forms an intersubunit bridge (bridge B4) with the 23S rRNA of the 50S subunit in the ribosome. This Limosilactobacillus reuteri (strain DSM 20016) (Lactobacillus reuteri) protein is Small ribosomal subunit protein uS15.